A 161-amino-acid chain; its full sequence is Phosphopantetheine adenylyltransferase (161 aa).

T11 contributes to the substrate binding site. ATP is bound by residues 11–12 (TF) and H19. Substrate is bound by residues K43, T75, and R89. ATP is bound by residues 90–92 (GLR), E100, and 125–131 (YSFLSSS).

It belongs to the bacterial CoaD family. Homohexamer. The cofactor is Mg(2+).

It is found in the cytoplasm. The catalysed reaction is (R)-4'-phosphopantetheine + ATP + H(+) = 3'-dephospho-CoA + diphosphate. The protein operates within cofactor biosynthesis; coenzyme A biosynthesis; CoA from (R)-pantothenate: step 4/5. Reversibly transfers an adenylyl group from ATP to 4'-phosphopantetheine, yielding dephospho-CoA (dPCoA) and pyrophosphate. In Listeria innocua serovar 6a (strain ATCC BAA-680 / CLIP 11262), this protein is Phosphopantetheine adenylyltransferase.